Consider the following 320-residue polypeptide: Beta-ketoacyl-[acyl-carrier-protein] synthase III (320 aa).

Catalysis depends on residues Cys112 and His245. The ACP-binding stretch occupies residues 246-250 (QANIR). Asn275 is an active-site residue.

The protein belongs to the thiolase-like superfamily. FabH family. Homodimer.

Its subcellular location is the cytoplasm. It carries out the reaction malonyl-[ACP] + acetyl-CoA + H(+) = 3-oxobutanoyl-[ACP] + CO2 + CoA. It functions in the pathway lipid metabolism; fatty acid biosynthesis. Catalyzes the condensation reaction of fatty acid synthesis by the addition to an acyl acceptor of two carbons from malonyl-ACP. Catalyzes the first condensation reaction which initiates fatty acid synthesis and may therefore play a role in governing the total rate of fatty acid production. Possesses both acetoacetyl-ACP synthase and acetyl transacylase activities. Its substrate specificity determines the biosynthesis of branched-chain and/or straight-chain of fatty acids. In Streptococcus thermophilus (strain ATCC BAA-250 / LMG 18311), this protein is Beta-ketoacyl-[acyl-carrier-protein] synthase III.